A 140-amino-acid polypeptide reads, in one-letter code: Nucleoside diphosphate kinase (140 aa).

Lys10, Phe58, Arg86, Thr92, Arg103, and Asn113 together coordinate ATP. His116 acts as the Pros-phosphohistidine intermediate in catalysis.

Belongs to the NDK family. As to quaternary structure, homotetramer. Mg(2+) serves as cofactor.

The protein localises to the cytoplasm. It carries out the reaction a 2'-deoxyribonucleoside 5'-diphosphate + ATP = a 2'-deoxyribonucleoside 5'-triphosphate + ADP. The catalysed reaction is a ribonucleoside 5'-diphosphate + ATP = a ribonucleoside 5'-triphosphate + ADP. Major role in the synthesis of nucleoside triphosphates other than ATP. The ATP gamma phosphate is transferred to the NDP beta phosphate via a ping-pong mechanism, using a phosphorylated active-site intermediate. This Haemophilus influenzae (strain PittEE) protein is Nucleoside diphosphate kinase.